The sequence spans 103 residues: MSNSCSTSSYPIRRKTPTRSGSNVNRNYVPSTYRPSICQCNQSNQSNQYNRSCHQTLPWYNKSNKPSFLDYKVNGSHSARKTCPSIPAKYHSPYTQCSGKCCC.

2 stretches are compositionally biased toward polar residues: residues Met1–Tyr10 and Thr18–Tyr28. A disordered region spans residues Met1 to Tyr28.

This is an uncharacterized protein from Acanthamoeba polyphaga mimivirus (APMV).